Consider the following 264-residue polypeptide: Thymidylate synthase (264 aa).

DUMP is bound at residue Arg21. His51 is a binding site for (6R)-5,10-methylene-5,6,7,8-tetrahydrofolate. DUMP is bound at residue 126–127; that stretch reads RR. Cys146 functions as the Nucleophile in the catalytic mechanism. Residues 166-169, Asn177, and 207-209 each bind dUMP; these read RSCD and HLY. Asp169 is a binding site for (6R)-5,10-methylene-5,6,7,8-tetrahydrofolate. Ala263 contacts (6R)-5,10-methylene-5,6,7,8-tetrahydrofolate.

This sequence belongs to the thymidylate synthase family. Bacterial-type ThyA subfamily. Homodimer.

The protein localises to the cytoplasm. The enzyme catalyses dUMP + (6R)-5,10-methylene-5,6,7,8-tetrahydrofolate = 7,8-dihydrofolate + dTMP. The protein operates within pyrimidine metabolism; dTTP biosynthesis. Functionally, catalyzes the reductive methylation of 2'-deoxyuridine-5'-monophosphate (dUMP) to 2'-deoxythymidine-5'-monophosphate (dTMP) while utilizing 5,10-methylenetetrahydrofolate (mTHF) as the methyl donor and reductant in the reaction, yielding dihydrofolate (DHF) as a by-product. This enzymatic reaction provides an intracellular de novo source of dTMP, an essential precursor for DNA biosynthesis. This chain is Thymidylate synthase, found in Shewanella oneidensis (strain ATCC 700550 / JCM 31522 / CIP 106686 / LMG 19005 / NCIMB 14063 / MR-1).